Here is a 156-residue protein sequence, read N- to C-terminus: ATP synthase subunit b (156 aa).

The helical transmembrane segment at 7-27 (LFAQMIVFFVLWWVVARFVWP) threads the bilayer.

Belongs to the ATPase B chain family. F-type ATPases have 2 components, F(1) - the catalytic core - and F(0) - the membrane proton channel. F(1) has five subunits: alpha(3), beta(3), gamma(1), delta(1), epsilon(1). F(0) has three main subunits: a(1), b(2) and c(10-14). The alpha and beta chains form an alternating ring which encloses part of the gamma chain. F(1) is attached to F(0) by a central stalk formed by the gamma and epsilon chains, while a peripheral stalk is formed by the delta and b chains.

Its subcellular location is the cell membrane. Its function is as follows. F(1)F(0) ATP synthase produces ATP from ADP in the presence of a proton or sodium gradient. F-type ATPases consist of two structural domains, F(1) containing the extramembraneous catalytic core and F(0) containing the membrane proton channel, linked together by a central stalk and a peripheral stalk. During catalysis, ATP synthesis in the catalytic domain of F(1) is coupled via a rotary mechanism of the central stalk subunits to proton translocation. Functionally, component of the F(0) channel, it forms part of the peripheral stalk, linking F(1) to F(0). The polypeptide is ATP synthase subunit b (Polynucleobacter asymbioticus (strain DSM 18221 / CIP 109841 / QLW-P1DMWA-1) (Polynucleobacter necessarius subsp. asymbioticus)).